Here is a 330-residue protein sequence, read N- to C-terminus: Thioredoxin domain-containing protein 6 (330 aa).

A Thioredoxin domain is found at 11–115; it reads QVNISTQELW…QKTILDQLEA (105 aa). The tract at residues 157-303 is NDK; sequence ERTCTLAIIK…LFPSLKFSDK (147 aa). The disordered stretch occupies residues 300–330; the sequence is FSDKDTEAPQGGEAEATAGPTEALCFPEDVD. A compositionally biased stretch (low complexity) spans 307–322; the sequence is APQGGEAEATAGPTEA.

This sequence belongs to the NDK family. As to quaternary structure, monomer and homodimer. In terms of tissue distribution, detected at very low levels in testis, lung and brain.

The protein resides in the cytoplasm. The protein localises to the cytoskeleton. It is found in the cilium axoneme. Its subcellular location is the dynein axonemal particle. Its function is as follows. May be a regulator of microtubule physiology. In Homo sapiens (Human), this protein is Thioredoxin domain-containing protein 6.